We begin with the raw amino-acid sequence, 515 residues long: Serine/threonine-protein kinase STE7 (515 aa).

In terms of domain architecture, Protein kinase spans 191–466; it reads LVQLGKIGAG…IHELLHHDLI (276 aa). ATP is bound by residues 197–205 and Lys220; that span reads IGAGNSGTV. Asp331 functions as the Proton acceptor in the catalytic mechanism. Ser359 is subject to Phosphoserine. Position 363 is a phosphothreonine (Thr363).

The protein belongs to the protein kinase superfamily. STE Ser/Thr protein kinase family. MAP kinase kinase subfamily.

The catalysed reaction is L-seryl-[protein] + ATP = O-phospho-L-seryl-[protein] + ADP + H(+). It catalyses the reaction L-threonyl-[protein] + ATP = O-phospho-L-threonyl-[protein] + ADP + H(+). The enzyme catalyses L-tyrosyl-[protein] + ATP = O-phospho-L-tyrosyl-[protein] + ADP + H(+). Its activity is regulated as follows. Phosphorylated at multiple sites in response to pheromone. In terms of biological role, serine/threonine protein kinase required for cell-type-specific transcription and signal transduction in yeast. It is thought that it is phosphorylated by the ste11 protein kinase and that it can phosphorylate the FUS3 and or KSS1 kinases. This chain is Serine/threonine-protein kinase STE7 (STE7), found in Saccharomyces cerevisiae (strain ATCC 204508 / S288c) (Baker's yeast).